A 29-amino-acid polypeptide reads, in one-letter code: Cytochrome b6-f complex subunit 8 (29 aa).

Residues 3-23 (ILTLGWVSVLTLFTYSIAMVV) form a helical membrane-spanning segment.

This sequence belongs to the PetN family. The 4 large subunits of the cytochrome b6-f complex are cytochrome b6, subunit IV (17 kDa polypeptide, PetD), cytochrome f and the Rieske protein, while the 4 small subunits are PetG, PetL, PetM and PetN. The complex functions as a dimer.

The protein localises to the cellular thylakoid membrane. Component of the cytochrome b6-f complex, which mediates electron transfer between photosystem II (PSII) and photosystem I (PSI), cyclic electron flow around PSI, and state transitions. The sequence is that of Cytochrome b6-f complex subunit 8 from Acaryochloris marina (strain MBIC 11017).